The chain runs to 1145 residues: Cellulose synthase-like protein D3 (1145 aa).

Residues Met1–Asp19 are compositionally biased toward polar residues. Disordered stretches follow at residues Met1–Arg38 and Asp189–Asp208. Transmembrane regions (helical) follow at residues Val289–Met309 and Ala319–Leu339. The active site involves Asp419. The residue at position 755 (Ser755) is a Phosphoserine. Asp848 is a catalytic residue. The next 6 membrane-spanning stretches (helical) occupy residues Phe930–Val950, Thr956–Ile976, Leu1002–Leu1022, Ser1045–Phe1065, Leu1079–Gly1099, and Thr1109–Ile1129.

This sequence belongs to the glycosyltransferase 2 family. Plant cellulose synthase-like D subfamily. In terms of tissue distribution, preferentially expressed in root hair cells. Expressed in roots, leaves, stems, flowers and siliques.

The protein resides in the golgi apparatus membrane. Thought to be a Golgi-localized beta-glycan synthase that polymerize the backbones of noncellulosic polysaccharides (hemicelluloses) of plant cell wall. Required for synthesis of a cell wall polysaccharide essential for root hair elongation, but not initiation. May be the functional ortholog of rice CSLD1. The sequence is that of Cellulose synthase-like protein D3 (CSLD3) from Arabidopsis thaliana (Mouse-ear cress).